The following is a 201-amino-acid chain: Holliday junction branch migration complex subunit RuvA (201 aa).

Residues 1 to 63 are domain I; that stretch reads MISHFSGTVS…EESLTLYGFV (63 aa). The tract at residues 64–142 is domain II; the sequence is EADDRDAFEL…ALAPRGASAS (79 aa). The tract at residues 143–153 is flexible linker; it reads GATHVAAPWRE. Residues 153 to 201 are domain III; that stretch reads EQVAEGLVGLGWSTKDAEKAVDKVVALKEADPAMSIGNLMRAALRSLAR.

It belongs to the RuvA family. In terms of assembly, homotetramer. Forms an RuvA(8)-RuvB(12)-Holliday junction (HJ) complex. HJ DNA is sandwiched between 2 RuvA tetramers; dsDNA enters through RuvA and exits via RuvB. An RuvB hexamer assembles on each DNA strand where it exits the tetramer. Each RuvB hexamer is contacted by two RuvA subunits (via domain III) on 2 adjacent RuvB subunits; this complex drives branch migration. In the full resolvosome a probable DNA-RuvA(4)-RuvB(12)-RuvC(2) complex forms which resolves the HJ.

The protein localises to the cytoplasm. In terms of biological role, the RuvA-RuvB-RuvC complex processes Holliday junction (HJ) DNA during genetic recombination and DNA repair, while the RuvA-RuvB complex plays an important role in the rescue of blocked DNA replication forks via replication fork reversal (RFR). RuvA specifically binds to HJ cruciform DNA, conferring on it an open structure. The RuvB hexamer acts as an ATP-dependent pump, pulling dsDNA into and through the RuvAB complex. HJ branch migration allows RuvC to scan DNA until it finds its consensus sequence, where it cleaves and resolves the cruciform DNA. This chain is Holliday junction branch migration complex subunit RuvA, found in Cutibacterium acnes (strain DSM 16379 / KPA171202) (Propionibacterium acnes).